The chain runs to 472 residues: Siroheme synthase 1 (472 aa).

A precorrin-2 dehydrogenase /sirohydrochlorin ferrochelatase region spans residues 1–203; that stretch reads MDYLPLFADL…GQLTEAENEL (203 aa). NAD(+) is bound by residues 22–23 and 43–44; these read EV and QT. Serine 128 is modified (phosphoserine). The segment at 215-472 is uroporphyrinogen-III C-methyltransferase; sequence GEVALVGAGP…AISPSVVNLA (258 aa). Proline 224 is a binding site for S-adenosyl-L-methionine. Aspartate 247 functions as the Proton acceptor in the catalytic mechanism. Residue lysine 269 is the Proton donor of the active site. S-adenosyl-L-methionine-binding positions include 300 to 302, isoleucine 305, 330 to 331, methionine 382, and glycine 411; these read GGD and TA.

The protein in the N-terminal section; belongs to the precorrin-2 dehydrogenase / sirohydrochlorin ferrochelatase family. This sequence in the C-terminal section; belongs to the precorrin methyltransferase family.

It catalyses the reaction uroporphyrinogen III + 2 S-adenosyl-L-methionine = precorrin-2 + 2 S-adenosyl-L-homocysteine + H(+). The enzyme catalyses precorrin-2 + NAD(+) = sirohydrochlorin + NADH + 2 H(+). It carries out the reaction siroheme + 2 H(+) = sirohydrochlorin + Fe(2+). The protein operates within cofactor biosynthesis; adenosylcobalamin biosynthesis; precorrin-2 from uroporphyrinogen III: step 1/1. Its pathway is cofactor biosynthesis; adenosylcobalamin biosynthesis; sirohydrochlorin from precorrin-2: step 1/1. It functions in the pathway porphyrin-containing compound metabolism; siroheme biosynthesis; precorrin-2 from uroporphyrinogen III: step 1/1. It participates in porphyrin-containing compound metabolism; siroheme biosynthesis; siroheme from sirohydrochlorin: step 1/1. The protein operates within porphyrin-containing compound metabolism; siroheme biosynthesis; sirohydrochlorin from precorrin-2: step 1/1. Its function is as follows. Multifunctional enzyme that catalyzes the SAM-dependent methylations of uroporphyrinogen III at position C-2 and C-7 to form precorrin-2 via precorrin-1. Then it catalyzes the NAD-dependent ring dehydrogenation of precorrin-2 to yield sirohydrochlorin. Finally, it catalyzes the ferrochelation of sirohydrochlorin to yield siroheme. The chain is Siroheme synthase 1 from Yersinia pestis bv. Antiqua (strain Nepal516).